The chain runs to 284 residues: Diaminopimelate epimerase (284 aa).

2 residues coordinate substrate: Asn13 and Asn66. Cys75 acts as the Proton donor in catalysis. Residues 76-77, Asn166, Asn199, and 217-218 contribute to the substrate site; these read GN and ER. The Proton acceptor role is filled by Cys226. 227–228 is a substrate binding site; the sequence is GT.

The protein belongs to the diaminopimelate epimerase family. As to quaternary structure, homodimer.

It localises to the cytoplasm. It carries out the reaction (2S,6S)-2,6-diaminopimelate = meso-2,6-diaminopimelate. It participates in amino-acid biosynthesis; L-lysine biosynthesis via DAP pathway; DL-2,6-diaminopimelate from LL-2,6-diaminopimelate: step 1/1. Catalyzes the stereoinversion of LL-2,6-diaminopimelate (L,L-DAP) to meso-diaminopimelate (meso-DAP), a precursor of L-lysine and an essential component of the bacterial peptidoglycan. In Halothermothrix orenii (strain H 168 / OCM 544 / DSM 9562), this protein is Diaminopimelate epimerase.